Here is a 617-residue protein sequence, read N- to C-terminus: DNA mismatch repair protein MutL (617 aa).

This sequence belongs to the DNA mismatch repair MutL/HexB family.

This protein is involved in the repair of mismatches in DNA. It is required for dam-dependent methyl-directed DNA mismatch repair. May act as a 'molecular matchmaker', a protein that promotes the formation of a stable complex between two or more DNA-binding proteins in an ATP-dependent manner without itself being part of a final effector complex. The polypeptide is DNA mismatch repair protein MutL (Christiangramia forsetii (strain DSM 17595 / CGMCC 1.15422 / KT0803) (Gramella forsetii)).